The sequence spans 357 residues: Peptide chain release factor 1 (357 aa).

Gln-234 carries the post-translational modification N5-methylglutamine.

The protein belongs to the prokaryotic/mitochondrial release factor family. Methylated by PrmC. Methylation increases the termination efficiency of RF1.

The protein localises to the cytoplasm. Functionally, peptide chain release factor 1 directs the termination of translation in response to the peptide chain termination codons UAG and UAA. The polypeptide is Peptide chain release factor 1 (Alkaliphilus oremlandii (strain OhILAs) (Clostridium oremlandii (strain OhILAs))).